The chain runs to 190 residues: Ion-translocating oxidoreductase complex subunit B (190 aa).

The tract at residues 1-26 (MLTFWLAVATLSALALVAGAVLGFAA) is hydrophobic. The region spanning 32–90 (KTDPVAERIDALLPQSQCAQCGYPGCRPYAEAVAGGAPINKCVPGGEAVMLKIAAQLSV) is the 4Fe-4S domain. Residues C49, C52, C57, C73, C115, C118, C121, C125, C145, C148, C151, and C155 each coordinate [4Fe-4S] cluster. 4Fe-4S ferredoxin-type domains follow at residues 106–135 (RVAW…GATR) and 136–165 (AVHT…MRPL).

This sequence belongs to the 4Fe4S bacterial-type ferredoxin family. RnfB subfamily. The complex is composed of six subunits: RnfA, RnfB, RnfC, RnfD, RnfE and RnfG. [4Fe-4S] cluster is required as a cofactor.

It is found in the cell inner membrane. Part of a membrane-bound complex that couples electron transfer with translocation of ions across the membrane. The sequence is that of Ion-translocating oxidoreductase complex subunit B from Sodalis glossinidius (strain morsitans).